The chain runs to 361 residues: DNA replication and repair protein RecF (361 aa).

30-37 contacts ATP; sequence GPNGSGKT.

The protein belongs to the RecF family.

Its subcellular location is the cytoplasm. The RecF protein is involved in DNA metabolism; it is required for DNA replication and normal SOS inducibility. RecF binds preferentially to single-stranded, linear DNA. It also seems to bind ATP. This chain is DNA replication and repair protein RecF, found in Erwinia tasmaniensis (strain DSM 17950 / CFBP 7177 / CIP 109463 / NCPPB 4357 / Et1/99).